Reading from the N-terminus, the 331-residue chain is 6-phosphogluconolactonase (331 aa).

It belongs to the cycloisomerase 2 family.

It carries out the reaction 6-phospho-D-glucono-1,5-lactone + H2O = 6-phospho-D-gluconate + H(+). It functions in the pathway carbohydrate degradation; pentose phosphate pathway; D-ribulose 5-phosphate from D-glucose 6-phosphate (oxidative stage): step 2/3. Catalyzes the hydrolysis of 6-phosphogluconolactone to 6-phosphogluconate. The sequence is that of 6-phosphogluconolactonase from Klebsiella pneumoniae subsp. pneumoniae (strain ATCC 700721 / MGH 78578).